Reading from the N-terminus, the 463-residue chain is ATP-dependent protease ATPase subunit HslU (463 aa).

ATP-binding positions include Val-21, 63–68, Asp-276, Glu-341, and Arg-413; that span reads GVGKTE.

This sequence belongs to the ClpX chaperone family. HslU subfamily. As to quaternary structure, a double ring-shaped homohexamer of HslV is capped on each side by a ring-shaped HslU homohexamer. The assembly of the HslU/HslV complex is dependent on binding of ATP.

It localises to the cytoplasm. Its function is as follows. ATPase subunit of a proteasome-like degradation complex; this subunit has chaperone activity. The binding of ATP and its subsequent hydrolysis by HslU are essential for unfolding of protein substrates subsequently hydrolyzed by HslV. HslU recognizes the N-terminal part of its protein substrates and unfolds these before they are guided to HslV for hydrolysis. The sequence is that of ATP-dependent protease ATPase subunit HslU from Thermotoga sp. (strain RQ2).